Reading from the N-terminus, the 317-residue chain is Aspartate carbamoyltransferase catalytic subunit (317 aa).

Carbamoyl phosphate is bound by residues arginine 66 and threonine 67. Lysine 94 provides a ligand contact to L-aspartate. Residues arginine 116, histidine 144, and glutamine 147 each contribute to the carbamoyl phosphate site. The L-aspartate site is built by arginine 177 and arginine 231. The carbamoyl phosphate site is built by glycine 272 and proline 273.

It belongs to the aspartate/ornithine carbamoyltransferase superfamily. ATCase family. As to quaternary structure, heterododecamer (2C3:3R2) of six catalytic PyrB chains organized as two trimers (C3), and six regulatory PyrI chains organized as three dimers (R2).

It carries out the reaction carbamoyl phosphate + L-aspartate = N-carbamoyl-L-aspartate + phosphate + H(+). The protein operates within pyrimidine metabolism; UMP biosynthesis via de novo pathway; (S)-dihydroorotate from bicarbonate: step 2/3. Its function is as follows. Catalyzes the condensation of carbamoyl phosphate and aspartate to form carbamoyl aspartate and inorganic phosphate, the committed step in the de novo pyrimidine nucleotide biosynthesis pathway. The protein is Aspartate carbamoyltransferase catalytic subunit of Nitrobacter winogradskyi (strain ATCC 25391 / DSM 10237 / CIP 104748 / NCIMB 11846 / Nb-255).